Consider the following 427-residue polypeptide: Homeobox protein knotted-1-like 3 (427 aa).

2 disordered regions span residues 19–49 and 272–291; these read QTHH…QPAP and TGVS…EDDQ. The segment covering 272-284 has biased composition (polar residues); that stretch reads TGVSPGEGTSATM. Residues 330–350 enclose the ELK domain; the sequence is ELKHELKQGYKEKIVDIREEI. The segment at residues 351 to 414 is a DNA-binding region (homeobox; TALE-type); the sequence is LRKRRAGKLP…NQRKRNWHSN (64 aa).

This sequence belongs to the TALE/KNOX homeobox family. Maximally expressed in sepals, petals and fully expanded leaves. Also expressed in other flower organs and in developing leaves. Low level expression in stem internodes.

It is found in the nucleus. The chain is Homeobox protein knotted-1-like 3 from Malus domestica (Apple).